The following is a 360-amino-acid chain: Phosphoserine aminotransferase (360 aa).

Position 42 (arginine 42) interacts with L-glutamate. Pyridoxal 5'-phosphate contacts are provided by residues 76 to 77, tryptophan 102, threonine 152, aspartate 172, and glutamine 195; that span reads AR. The residue at position 196 (lysine 196) is an N6-(pyridoxal phosphate)lysine. 237–238 is a pyridoxal 5'-phosphate binding site; sequence NT.

This sequence belongs to the class-V pyridoxal-phosphate-dependent aminotransferase family. SerC subfamily. As to quaternary structure, homodimer. The cofactor is pyridoxal 5'-phosphate.

Its subcellular location is the cytoplasm. It catalyses the reaction O-phospho-L-serine + 2-oxoglutarate = 3-phosphooxypyruvate + L-glutamate. The enzyme catalyses 4-(phosphooxy)-L-threonine + 2-oxoglutarate = (R)-3-hydroxy-2-oxo-4-phosphooxybutanoate + L-glutamate. The protein operates within amino-acid biosynthesis; L-serine biosynthesis; L-serine from 3-phospho-D-glycerate: step 2/3. It functions in the pathway cofactor biosynthesis; pyridoxine 5'-phosphate biosynthesis; pyridoxine 5'-phosphate from D-erythrose 4-phosphate: step 3/5. Its function is as follows. Catalyzes the reversible conversion of 3-phosphohydroxypyruvate to phosphoserine and of 3-hydroxy-2-oxo-4-phosphonooxybutanoate to phosphohydroxythreonine. The polypeptide is Phosphoserine aminotransferase (Pasteurella multocida (strain Pm70)).